Reading from the N-terminus, the 86-residue chain is Exodeoxyribonuclease 7 small subunit (86 aa).

The interval 1–27 is disordered; sequence MQDELFETEKIPPKNTKNAKNAPKKSF.

This sequence belongs to the XseB family. As to quaternary structure, heterooligomer composed of large and small subunits.

The protein resides in the cytoplasm. The catalysed reaction is Exonucleolytic cleavage in either 5'- to 3'- or 3'- to 5'-direction to yield nucleoside 5'-phosphates.. Functionally, bidirectionally degrades single-stranded DNA into large acid-insoluble oligonucleotides, which are then degraded further into small acid-soluble oligonucleotides. The polypeptide is Exodeoxyribonuclease 7 small subunit (Helicobacter pylori (strain G27)).